The chain runs to 276 residues: Small ribosomal subunit protein uS2 (276 aa).

The residue at position 2 (serine 2) is an N-acetylserine.

The protein belongs to the universal ribosomal protein uS2 family. Component of the small ribosomal subunit. Mature ribosomes consist of a small (40S) and a large (60S) subunit. The 40S subunit contains about 33 different proteins and 1 molecule of RNA (18S). The 60S subunit contains about 49 different proteins and 3 molecules of RNA (28S, 5.8S and 5S). Interacts with rps-21.

It is found in the cytoplasm. Required for the assembly and/or stability of the 40S ribosomal subunit. Required for the processing of the 20S rRNA-precursor to mature 18S rRNA in a late step of the maturation of 40S ribosomal subunits. Involved in cold-warm shock-induced translocation of the RNA exosome components from the nucleolus to nucleoplasm. The polypeptide is Small ribosomal subunit protein uS2 (Caenorhabditis elegans).